The following is a 207-amino-acid chain: Holliday junction branch migration complex subunit RuvA (207 aa).

The interval 1–64 (MIGRLRGNLL…EDAQLLYGFN (64 aa)) is domain I. Residues 65–143 (TKNERALFRE…GWGAGDLFTP (79 aa)) form a domain II region. The flexible linker stretch occupies residues 144–158 (ATDAAPMDDGSEFIT). Residues 159 to 207 (SPQSAVDEAVSALIALGYKPQQASKTVSQIAKPDMTSEVLIRESLKSMI) are domain III.

The protein belongs to the RuvA family. As to quaternary structure, homotetramer. Forms an RuvA(8)-RuvB(12)-Holliday junction (HJ) complex. HJ DNA is sandwiched between 2 RuvA tetramers; dsDNA enters through RuvA and exits via RuvB. An RuvB hexamer assembles on each DNA strand where it exits the tetramer. Each RuvB hexamer is contacted by two RuvA subunits (via domain III) on 2 adjacent RuvB subunits; this complex drives branch migration. In the full resolvosome a probable DNA-RuvA(4)-RuvB(12)-RuvC(2) complex forms which resolves the HJ.

It localises to the cytoplasm. Functionally, the RuvA-RuvB-RuvC complex processes Holliday junction (HJ) DNA during genetic recombination and DNA repair, while the RuvA-RuvB complex plays an important role in the rescue of blocked DNA replication forks via replication fork reversal (RFR). RuvA specifically binds to HJ cruciform DNA, conferring on it an open structure. The RuvB hexamer acts as an ATP-dependent pump, pulling dsDNA into and through the RuvAB complex. HJ branch migration allows RuvC to scan DNA until it finds its consensus sequence, where it cleaves and resolves the cruciform DNA. The polypeptide is Holliday junction branch migration complex subunit RuvA (Aliivibrio fischeri (strain ATCC 700601 / ES114) (Vibrio fischeri)).